The following is a 456-amino-acid chain: Bifunctional protein GlmU (456 aa).

Residues 1–229 are pyrophosphorylase; sequence MSNSAMSVVI…LSEVEGVNNR (229 aa). UDP-N-acetyl-alpha-D-glucosamine is bound by residues 11 to 14, K25, Q76, 81 to 82, 103 to 105, G140, E154, N169, and N227; these read LAAG, GT, and YGD. A Mg(2+)-binding site is contributed by D105. N227 contributes to the Mg(2+) binding site. The segment at 230–250 is linker; the sequence is LQLSALERVYQREQADRLLLA. The N-acetyltransferase stretch occupies residues 251-456; sequence GVMLLDPARF…SGWQRPVKKK (206 aa). Residues R333 and K351 each contribute to the UDP-N-acetyl-alpha-D-glucosamine site. H363 (proton acceptor) is an active-site residue. UDP-N-acetyl-alpha-D-glucosamine contacts are provided by Y366 and N377. Residues A380, 386–387, S405, A423, and R440 each bind acetyl-CoA; that span reads NY.

It in the N-terminal section; belongs to the N-acetylglucosamine-1-phosphate uridyltransferase family. This sequence in the C-terminal section; belongs to the transferase hexapeptide repeat family. In terms of assembly, homotrimer. It depends on Mg(2+) as a cofactor.

The protein resides in the cytoplasm. The enzyme catalyses alpha-D-glucosamine 1-phosphate + acetyl-CoA = N-acetyl-alpha-D-glucosamine 1-phosphate + CoA + H(+). It carries out the reaction N-acetyl-alpha-D-glucosamine 1-phosphate + UTP + H(+) = UDP-N-acetyl-alpha-D-glucosamine + diphosphate. Its pathway is nucleotide-sugar biosynthesis; UDP-N-acetyl-alpha-D-glucosamine biosynthesis; N-acetyl-alpha-D-glucosamine 1-phosphate from alpha-D-glucosamine 6-phosphate (route II): step 2/2. It participates in nucleotide-sugar biosynthesis; UDP-N-acetyl-alpha-D-glucosamine biosynthesis; UDP-N-acetyl-alpha-D-glucosamine from N-acetyl-alpha-D-glucosamine 1-phosphate: step 1/1. The protein operates within bacterial outer membrane biogenesis; LPS lipid A biosynthesis. Catalyzes the last two sequential reactions in the de novo biosynthetic pathway for UDP-N-acetylglucosamine (UDP-GlcNAc). The C-terminal domain catalyzes the transfer of acetyl group from acetyl coenzyme A to glucosamine-1-phosphate (GlcN-1-P) to produce N-acetylglucosamine-1-phosphate (GlcNAc-1-P), which is converted into UDP-GlcNAc by the transfer of uridine 5-monophosphate (from uridine 5-triphosphate), a reaction catalyzed by the N-terminal domain. This Pectobacterium carotovorum subsp. carotovorum (strain PC1) protein is Bifunctional protein GlmU.